We begin with the raw amino-acid sequence, 715 residues long: Protein DOA1 (715 aa).

WD repeat units lie at residues Gly11–Ser40, Gly53–Pro82, Gly97–Lys125, Ala135–Gln166, Ile177–Asp206, Gly218–Ser247, and Leu259–Ser288. Position 332 is a phosphoserine (Ser332). The PFU domain maps to Ala352–Asp449. Positions Phe434 to Asn440 are interaction with HSE1. Residues Lys465–Ser715 form the PUL domain. 6 ARM repeats span residues Tyr478–Ile512, Asp513–Ile543, Val544–Asn582, Glu583–Lys635, Gly636–Val680, and Glu681–Ser715.

Belongs to the WD repeat PLAP family. In terms of assembly, forms a complex composed of CDC48, NPL4, UFD1, DOA1, SHP1 and deubiquitinase OTU1; within the complex interacts with CDC48. Interacts (via PUL domain) with CDC48 (via C-terminus); the interaction is direct. Forms a complex composed of CDC48, DOA1, deubiquitinase UBP3 and probably BRE5; within the complex interacts with CDC48 and UBP3. May form a complex composed of VPS27, HSE1 and DOA1. Interacts with HSE1 (via SH3 domain). Interacts (via WD repeats and PFU domain) with ubiquitin; the interaction is direct. Interacts with ubiquitinated FZO1 but not unmodified FZO1; the interaction recruits FZO1 to CDC48 and promotes FZO1 proteasomal degradation.

The protein localises to the nucleus. It is found in the cytoplasm. It localises to the mitochondrion outer membrane. The protein resides in the endosome membrane. Ubiquitin-binding protein involved in protein ubiquitination, sorting and degradation. Acts as a ubiquitinated substrate-recruiting adapter for chaperone ATPase CDC48 by binding mono- or polyubiquitin chains. Depending on the context, promotes or prevents proteasomal degradation of ubiquitinated proteins. Involved in the ubiquitin fusion degradation (UFD) pathway by promoting the degradation of ubiquitinated proteins. Involved in the mitochondria-associated degradation pathway (MAD) by promoting the degradation of several ubiquitinated membrane proteins. By competing with UFD2 to bind CDC48, prevents the multi-ubiquitination and subsequent degradation of UFD2-dependent substrates. Required for ribophagy, a process which relocalizes ribosomal particles into the vacuole for degradation in response to starvation. Involved in the ubiquitin-mediated sorting of membrane proteins into multivesicular bodies (MVBs). In addition, plays an essential role in maintaining cellular ubiquitin levels. May affect indirectly the degradation of ubiquitinylated proteins by regulating cellular ubiquitin levels. The sequence is that of Protein DOA1 from Saccharomyces cerevisiae (strain ATCC 204508 / S288c) (Baker's yeast).